The sequence spans 220 residues: Probable septum site-determining protein MinC (220 aa).

Belongs to the MinC family. In terms of assembly, interacts with MinD and FtsZ.

In terms of biological role, cell division inhibitor that blocks the formation of polar Z ring septums. Rapidly oscillates between the poles of the cell to destabilize FtsZ filaments that have formed before they mature into polar Z rings. Prevents FtsZ polymerization. The chain is Probable septum site-determining protein MinC from Prochlorococcus marinus subsp. pastoris (strain CCMP1986 / NIES-2087 / MED4).